We begin with the raw amino-acid sequence, 174 residues long: uncharacterized protein (174 aa).

In terms of domain architecture, N-acetyltransferase spans 42–174 (SNTKNINLYE…GVKGMFWYPR (133 aa)).

Belongs to the acetyltransferase family. Ycf52 subfamily.

The protein resides in the plastid. It is found in the chloroplast. This is an uncharacterized protein from Porphyra purpurea (Red seaweed).